The following is a 73-amino-acid chain: Putative antitoxin VapB18 (73 aa).

The protein belongs to the UPF0330 family.

Possibly the antitoxin component of a type II toxin-antitoxin (TA) system. Its cognate toxin is VapC18 (Potential). The protein is Putative antitoxin VapB18 (vapB18) of Archaeoglobus fulgidus (strain ATCC 49558 / DSM 4304 / JCM 9628 / NBRC 100126 / VC-16).